We begin with the raw amino-acid sequence, 191 residues long: ATP synthase subunit b (191 aa).

The helical transmembrane segment at 10–30 threads the bilayer; sequence FLVPGPTAIAELIVFLLILFI. The segment at 170-191 is disordered; it reads RAQRQPAASDVVGGQQREEVHR.

Belongs to the ATPase B chain family. As to quaternary structure, F-type ATPases have 2 components, F(1) - the catalytic core - and F(0) - the membrane proton channel. F(1) has five subunits: alpha(3), beta(3), gamma(1), delta(1), epsilon(1). F(0) has three main subunits: a(1), b(2) and c(10-14). The alpha and beta chains form an alternating ring which encloses part of the gamma chain. F(1) is attached to F(0) by a central stalk formed by the gamma and epsilon chains, while a peripheral stalk is formed by the delta and b chains.

The protein localises to the cell membrane. Functionally, f(1)F(0) ATP synthase produces ATP from ADP in the presence of a proton or sodium gradient. F-type ATPases consist of two structural domains, F(1) containing the extramembraneous catalytic core and F(0) containing the membrane proton channel, linked together by a central stalk and a peripheral stalk. During catalysis, ATP synthesis in the catalytic domain of F(1) is coupled via a rotary mechanism of the central stalk subunits to proton translocation. In terms of biological role, component of the F(0) channel, it forms part of the peripheral stalk, linking F(1) to F(0). The polypeptide is ATP synthase subunit b (Acidothermus cellulolyticus (strain ATCC 43068 / DSM 8971 / 11B)).